We begin with the raw amino-acid sequence, 291 residues long: Pyridoxal 5'-phosphate synthase subunit PdxS (291 aa).

Residue Asp23 participates in D-ribose 5-phosphate binding. Lys80 serves as the catalytic Schiff-base intermediate with D-ribose 5-phosphate. D-ribose 5-phosphate is bound at residue Gly152. Arg164 contacts D-glyceraldehyde 3-phosphate. Residues Gly213 and 234–235 each bind D-ribose 5-phosphate; that span reads GS.

This sequence belongs to the PdxS/SNZ family. In the presence of PdxT, forms a dodecamer of heterodimers.

It carries out the reaction aldehydo-D-ribose 5-phosphate + D-glyceraldehyde 3-phosphate + L-glutamine = pyridoxal 5'-phosphate + L-glutamate + phosphate + 3 H2O + H(+). The protein operates within cofactor biosynthesis; pyridoxal 5'-phosphate biosynthesis. In terms of biological role, catalyzes the formation of pyridoxal 5'-phosphate from ribose 5-phosphate (RBP), glyceraldehyde 3-phosphate (G3P) and ammonia. The ammonia is provided by the PdxT subunit. Can also use ribulose 5-phosphate and dihydroxyacetone phosphate as substrates, resulting from enzyme-catalyzed isomerization of RBP and G3P, respectively. The sequence is that of Pyridoxal 5'-phosphate synthase subunit PdxS from Streptococcus pneumoniae (strain P1031).